Consider the following 446-residue polypeptide: tRNA wybutosine-synthesizing protein 2 homolog (446 aa).

Residues Ser-208, Lys-215, Glu-255, and 283–284 (DN) contribute to the S-adenosyl-L-methionine site.

This sequence belongs to the class I-like SAM-binding methyltransferase superfamily. TRM5/TYW2 family.

The catalysed reaction is 4-demethylwyosine(37) in tRNA(Phe) + S-adenosyl-L-methionine = 4-demethyl-7-[(3S)-3-amino-3-carboxypropyl]wyosine(37) in tRNA(Phe) + S-methyl-5'-thioadenosine + H(+). The protein operates within tRNA modification; wybutosine-tRNA(Phe) biosynthesis. Functionally, S-adenosyl-L-methionine-dependent transferase that acts as a component of the wybutosine biosynthesis pathway. Wybutosine is a hyper modified guanosine with a tricyclic base found at the 3'-position adjacent to the anticodon of eukaryotic phenylalanine tRNA. Catalyzes the transfer of the alpha-amino-alpha-carboxypropyl (acp) group from S-adenosyl-L-methionine to the C-7 position of 4-demethylwyosine (imG-14) to produce wybutosine-86. The polypeptide is tRNA wybutosine-synthesizing protein 2 homolog (Trmt12) (Mus musculus (Mouse)).